Consider the following 339-residue polypeptide: tRNA-specific 2-thiouridylase MnmA (339 aa).

ATP is bound by residues 6-13 (AMSGGVDS) and Met32. The active-site Nucleophile is Cys92. Residues Cys92 and Cys186 are joined by a disulfide bond. Gly116 is an ATP binding site. Positions 134 to 136 (KDQ) are interaction with tRNA. Cys186 acts as the Cysteine persulfide intermediate in catalysis. The segment at 288-289 (RY) is interaction with tRNA.

It belongs to the MnmA/TRMU family.

It localises to the cytoplasm. The catalysed reaction is S-sulfanyl-L-cysteinyl-[protein] + uridine(34) in tRNA + AH2 + ATP = 2-thiouridine(34) in tRNA + L-cysteinyl-[protein] + A + AMP + diphosphate + H(+). Its function is as follows. Catalyzes the 2-thiolation of uridine at the wobble position (U34) of tRNA, leading to the formation of s(2)U34. This chain is tRNA-specific 2-thiouridylase MnmA, found in Campylobacter curvus (strain 525.92).